The primary structure comprises 72 residues: Large ribosomal subunit protein uL29 (72 aa).

It belongs to the universal ribosomal protein uL29 family. As to quaternary structure, part of the 50S ribosomal subunit.

The protein is Large ribosomal subunit protein uL29 of Pyrococcus furiosus (strain ATCC 43587 / DSM 3638 / JCM 8422 / Vc1).